An 81-amino-acid chain; its full sequence is Probable antitoxin MazE2 (81 aa).

In terms of assembly, forms a complex with cognate toxin MazF2.

Functionally, antitoxin component of a type II toxin-antitoxin (TA) system. This is Probable antitoxin MazE2 (mazE2) from Mycobacterium tuberculosis (strain ATCC 25618 / H37Rv).